Consider the following 114-residue polypeptide: Fumarate reductase subunit D (114 aa).

Transmembrane regions (helical) follow at residues 24–44 (ISAL…PLGI), 49–69 (GIIA…LTIF), and 94–114 (LIFY…VASI).

It belongs to the FrdD family. As to quaternary structure, part of an enzyme complex containing four subunits: a flavoprotein (FrdA), an iron-sulfur protein (FrdB), and two hydrophobic anchor proteins (FrdC and FrdD).

The protein localises to the cell inner membrane. Anchors the catalytic components of the fumarate reductase complex to the cell membrane, binds quinones. The protein is Fumarate reductase subunit D of Actinobacillus succinogenes (strain ATCC 55618 / DSM 22257 / CCUG 43843 / 130Z).